Reading from the N-terminus, the 455-residue chain is tRNA modification GTPase MnmE (455 aa).

Arg22 provides a ligand contact to (6S)-5-formyl-5,6,7,8-tetrahydrofolate. Positions 43–67 (RRATRAALRSPPSGPGPTGPGPEEG) are disordered. (6S)-5-formyl-5,6,7,8-tetrahydrofolate contacts are provided by Glu92 and Arg132. Residues 228 to 381 (GLQVAVVGAP…LEAALESRAR (154 aa)) form the TrmE-type G domain. Position 238 (Asn238) interacts with K(+). GTP is bound by residues 238–243 (NVGKSS), 257–263 (SDIAGTT), and 282–285 (DTAG). Ser242 contacts Mg(2+). 3 residues coordinate K(+): Ser257, Ile259, and Thr262. Thr263 is a Mg(2+) binding site. Position 455 (Lys455) interacts with (6S)-5-formyl-5,6,7,8-tetrahydrofolate.

Belongs to the TRAFAC class TrmE-Era-EngA-EngB-Septin-like GTPase superfamily. TrmE GTPase family. In terms of assembly, homodimer. Heterotetramer of two MnmE and two MnmG subunits. It depends on K(+) as a cofactor.

The protein resides in the cytoplasm. Exhibits a very high intrinsic GTPase hydrolysis rate. Involved in the addition of a carboxymethylaminomethyl (cmnm) group at the wobble position (U34) of certain tRNAs, forming tRNA-cmnm(5)s(2)U34. The chain is tRNA modification GTPase MnmE from Rhodospirillum rubrum (strain ATCC 11170 / ATH 1.1.1 / DSM 467 / LMG 4362 / NCIMB 8255 / S1).